A 499-amino-acid polypeptide reads, in one-letter code: 3-beta-hydroxylase (499 aa).

The chain crosses the membrane as a helical; Signal-anchor for type II membrane protein span at residues 2-22 (FSSFETLILSFVSLFFMMIFI). Cysteine 441 is a heme binding site.

It belongs to the cytochrome P450 family. It depends on heme as a cofactor.

Its subcellular location is the membrane. The enzyme catalyses (+)-costunolide + reduced [NADPH--hemoprotein reductase] + O2 = 3beta-hydroxycostunolide + oxidized [NADPH--hemoprotein reductase] + H2O + H(+). It catalyses the reaction parthenolide + reduced [NADPH--hemoprotein reductase] + O2 = 3beta-hydroxyparthenolide + oxidized [NADPH--hemoprotein reductase] + H2O + H(+). The protein operates within secondary metabolite biosynthesis; terpenoid biosynthesis. Functionally, involved in the biosynthesis of germacrene-derived sesquiterpene lactones. Component of the parthenolide biosynthetic pathway; parthenolide and conjugates are promising anti-cancer drugs highly active against colon cancer cells. Catalyzes the conversion of costunolide and parthenolide to 3-beta-hydroxycostunolide and 3-beta-hydroxyparthenolide, respectively. This is 3-beta-hydroxylase from Tanacetum parthenium (Feverfew).